Consider the following 550-residue polypeptide: Zinc finger protein squeeze (550 aa).

Residues Q73–Q105 are compositionally biased toward low complexity. The segment at Q73–S179 is disordered. Residues Q106 to K117 show a composition bias toward basic residues. Residues R141–S156 show a composition bias toward polar residues. Positions S164–G176 are enriched in gly residues. 5 consecutive C2H2-type zinc fingers follow at residues Y182–H204, Y210–H232, Y238–H262, F268–H290, and H299–H321. The disordered stretch occupies residues L399 to R485. Residues Q400 to Q416 are compositionally biased toward low complexity. The residue at position 424 (T424) is a Phosphothreonine. S428 and S430 each carry phosphoserine. The segment covering Q444–P460 has biased composition (low complexity). 2 positions are modified to phosphotyrosine: Y494 and Y496.

This sequence belongs to the krueppel C2H2-type zinc-finger protein family. In terms of assembly, interacts with nab; which acts as a coactivator. Interacts with ap.

It is found in the nucleus. Functionally, transcription factor involved in neuronal fate specification. First required in embryonic CNS development to define the number of cells that express apterous (ap) in the ap thoracic cluster of interneurons. Later on, it plays a central role in the combinatorial code of transcription factors that specifies the fate of the Tv neuron in the ap cluster by participating in the transcription regulation of FMRFa in Tv cells. Also required for projection neuron dendritic targeting. This is Zinc finger protein squeeze (sqz) from Drosophila pseudoobscura pseudoobscura (Fruit fly).